We begin with the raw amino-acid sequence, 189 residues long: uncharacterized protein (189 aa).

This sequence belongs to the mimivirus R457/R459 family.

Its subcellular location is the virion. This is an uncharacterized protein from Acanthamoeba polyphaga mimivirus (APMV).